The following is a 508-amino-acid chain: MTRRRHGWQRPLHPLQIVGAVIYSVLVAAFYVFLGFFLGNRIAVIALLSVFSSVAVSVIVLFVRCTAIDPTDKTSAKKKRKDKSKGVLMKLRVKVVLSQVVVRFFRRLERKILRNFLRRTYLDPWKSSVQLEPLLPFPLVMKDDDSVTPDPKEEDDISYCSLCDLEVKRSSKHCRTCNRCVEGFDHHCRWLNNCVGKKNYTTFILLMVFVLLMLIIEGGTALAVFVRCFVDKKGMEMELKRRLYVEFPQWALATISIILVLFTAYGSAAMGQLFLFHVVLIRKGMRTYDYILAMKEENQFTEVDPFDELDSSSDESSDFDSPERLRPTFISKFMCRKANENQQRLSIKIEGDEQSPSSTLINKKPGFHVSINPWKLITLSSEKALQAAEKAKERLRKTKPVSGTEENSLKPLPLETKFGLLLDPDNNNTVLQPSTTAAVKLQVSPGRFSSPRRRFSGSSSSTVPSPKQKYRTNFDLKLTEVSRELESYISRQVLCSVIKQDGSEASPR.

The next 2 membrane-spanning stretches (helical) occupy residues 17–37 (IVGA…LGFF) and 42–62 (IAVI…IVLF). Positions 158–208 (SYCSLCDLEVKRSSKHCRTCNRCVEGFDHHCRWLNNCVGKKNYTTFILLMV) constitute a DHHC domain. The active-site S-palmitoyl cysteine intermediate is the cysteine 188. 2 helical membrane passes run 203-223 (FILL…TALA) and 250-270 (WALA…SAAM). The interval 443 to 468 (VSPGRFSSPRRRFSGSSSSTVPSPKQ) is disordered. The segment covering 456–466 (SGSSSSTVPSP) has biased composition (low complexity).

The protein belongs to the DHHC palmitoyltransferase family.

It localises to the endoplasmic reticulum membrane. Its subcellular location is the cytoplasmic vesicle membrane. The enzyme catalyses L-cysteinyl-[protein] + hexadecanoyl-CoA = S-hexadecanoyl-L-cysteinyl-[protein] + CoA. Its function is as follows. S-acyltransferase involved in protein lipid modification. This is Protein S-acyltransferase 18 (PAT18) from Arabidopsis thaliana (Mouse-ear cress).